The sequence spans 406 residues: telomere-associated protein 1 (406 aa).

Positions E20 to N40 are enriched in basic and acidic residues. Residues E20–A46 are disordered. The region spanning T147–Y206 is the HTH myb-type domain. The H-T-H motif DNA-binding region spans W175–F202. The Myb-like domain maps to V234–F288. The segment at T368–E389 is disordered.

Its subcellular location is the nucleus. The protein resides in the chromosome. It localises to the telomere. In terms of biological role, telomere-binding protein that mediates telomere clustering by promoting formation of head-to-head dimers of DNA molecules through the telomeric tracts. Binds specifically 5'-TTAGTCAGGG-3' repeats in subtelomeric regions. This is telomere-associated protein 1 from Yarrowia lipolytica (strain CLIB 122 / E 150) (Yeast).